Reading from the N-terminus, the 333-residue chain is Phosphate acyltransferase (333 aa).

This sequence belongs to the PlsX family. As to quaternary structure, homodimer. Probably interacts with PlsY.

The protein localises to the cytoplasm. It carries out the reaction a fatty acyl-[ACP] + phosphate = an acyl phosphate + holo-[ACP]. Its pathway is lipid metabolism; phospholipid metabolism. Catalyzes the reversible formation of acyl-phosphate (acyl-PO(4)) from acyl-[acyl-carrier-protein] (acyl-ACP). This enzyme utilizes acyl-ACP as fatty acyl donor, but not acyl-CoA. In Clostridium botulinum (strain Alaska E43 / Type E3), this protein is Phosphate acyltransferase.